Here is a 415-residue protein sequence, read N- to C-terminus: Beta-1,4-glucuronyltransferase 1 (415 aa).

The Cytoplasmic portion of the chain corresponds to 1–8; sequence MQMSYAIR. The helical; Signal-anchor for type II membrane protein transmembrane segment at 9–36 threads the bilayer; the sequence is CAFYQLLLAALMLVAMLQLLYLSLLSGL. Topologically, residues 37 to 415 are lumenal; the sequence is HGQEEQDQYF…AKYPDSPRHC (379 aa). The N-linked (GlcNAc...) asparagine glycan is linked to Asn-204. Asp-227 and Asp-229 together coordinate Mn(2+). N-linked (GlcNAc...) asparagine glycosylation occurs at Asn-300.

This sequence belongs to the glycosyltransferase 49 family. Interacts with LARGE1 and LARGE2. Mn(2+) serves as cofactor.

Its subcellular location is the golgi apparatus membrane. The enzyme catalyses 3-O-[beta-D-Xyl-(1-&gt;4)-Rib-ol-P-Rib-ol-P-3-beta-D-GalNAc-(1-&gt;3)-beta-D-GlcNAc-(1-&gt;4)-(O-6-P-alpha-D-Man)]-Thr-[protein] + UDP-alpha-D-glucuronate = 3-O-[beta-D-GlcA-(1-&gt;3)-beta-D-Xyl-(1-&gt;4)-Rib-ol-P-Rib-ol-P-3-beta-D-GalNAc-(1-&gt;3)-beta-D-GlcNAc-(1-&gt;4)-(O-6-P-alpha-D-Man)]-Thr-[protein] + UDP + H(+). Its pathway is protein modification; protein glycosylation. Beta-1,4-glucuronyltransferase involved in O-mannosylation of alpha-dystroglycan (DAG1). Transfers a glucuronic acid (GlcA) residue onto a xylose (Xyl) acceptor to produce the glucuronyl-beta-1,4-xylose-beta disaccharide primer, which is further elongated by LARGE1, during synthesis of phosphorylated O-mannosyl glycan. Phosphorylated O-mannosyl glycan is a carbohydrate structure present in alpha-dystroglycan (DAG1), which is required for binding laminin G-like domain-containing extracellular proteins with high affinity. Required for axon guidance; via its function in O-mannosylation of alpha-dystroglycan (DAG1). The polypeptide is Beta-1,4-glucuronyltransferase 1 (Bos taurus (Bovine)).